Consider the following 669-residue polypeptide: Translation factor GUF1, mitochondrial (669 aa).

The N-terminal 49 residues, 1-49, are a transit peptide targeting the mitochondrion; that stretch reads MWTLAGQGWWRGRALAAWVTEAARKGLLWPHLAPARGTAAESRAPDRCY. The region spanning 66–247 is the tr-type G domain; the sequence is ENTRNFSIIA…AVIKRIPFPK (182 aa). GTP-binding positions include 75-82, 140-144, and 194-197; these read AHVDHGKS, DTPGH, and NKID.

The protein belongs to the TRAFAC class translation factor GTPase superfamily. Classic translation factor GTPase family. LepA subfamily.

The protein resides in the mitochondrion inner membrane. The enzyme catalyses GTP + H2O = GDP + phosphate + H(+). In terms of biological role, promotes mitochondrial protein synthesis. May act as a fidelity factor of the translation reaction, by catalyzing a one-codon backward translocation of tRNAs on improperly translocated ribosomes. Binds to mitochondrial ribosomes in a GTP-dependent manner. The chain is Translation factor GUF1, mitochondrial from Bos taurus (Bovine).